A 125-amino-acid polypeptide reads, in one-letter code: Small ribosomal subunit protein uS12m (125 aa).

Belongs to the universal ribosomal protein uS12 family.

The protein localises to the mitochondrion. Functionally, protein S12 is involved in the translation initiation step. This chain is Small ribosomal subunit protein uS12m (RPS12), found in Helianthus annuus (Common sunflower).